A 135-amino-acid chain; its full sequence is MDYKQWVREFKKELAHEIEKELVAEVDDNIQRGFQKKELKWKPLSKDYQKRKEKEGRNTKGLIYHGALLKATDSKVKITSKGLQVKVFNNMVYAGVHEFGSKKKNIPARPFIQPALKKVQKDLPKIVEKVIKRMR.

This is an uncharacterized protein from Methanocaldococcus jannaschii (strain ATCC 43067 / DSM 2661 / JAL-1 / JCM 10045 / NBRC 100440) (Methanococcus jannaschii).